A 994-amino-acid chain; its full sequence is Protein translocase subunit SecA (994 aa).

Residues Q85, 103–107, and D492 contribute to the ATP site; that span reads GEGKT. Low complexity predominate over residues 868–888; that stretch reads IPDGAGPVADAQPVRPAAARQ. Positions 868–994 are disordered; that stretch reads IPDGAGPVAD…HGDPARRNTE (127 aa). Residues 889-900 show a composition bias toward pro residues; the sequence is TPPPPSPVPSAP. Positions 973, 975, 984, and 985 each coordinate Zn(2+). The span at 984 to 994 shows a compositional bias: basic and acidic residues; the sequence is CHGDPARRNTE.

It belongs to the SecA family. Monomer and homodimer. Part of the essential Sec protein translocation apparatus which comprises SecA, SecYEG and auxiliary proteins SecDF. Other proteins may also be involved. The cofactor is Zn(2+).

The protein localises to the cell membrane. It is found in the cytoplasm. The catalysed reaction is ATP + H2O + cellular proteinSide 1 = ADP + phosphate + cellular proteinSide 2.. Part of the Sec protein translocase complex. Interacts with the SecYEG preprotein conducting channel. Has a central role in coupling the hydrolysis of ATP to the transfer of proteins into and across the cell membrane, serving as an ATP-driven molecular motor driving the stepwise translocation of polypeptide chains across the membrane. The protein is Protein translocase subunit SecA of Frankia casuarinae (strain DSM 45818 / CECT 9043 / HFP020203 / CcI3).